The sequence spans 793 residues: E3 UFM1-protein ligase 1 (793 aa).

Residues 2–212 (AADWEEIRRL…INNLLNLYGF (211 aa)) are required for E3 UFM1-protein ligase activity. Disordered stretches follow at residues 405–472 (ALLE…RNKL) and 745–793 (GAEK…SVTE). Positions 427-439 (EGGGSVKSGGGGN) are enriched in gly residues. The segment covering 767 to 781 (SLQRELHSLSRDIKD) has biased composition (basic and acidic residues).

It belongs to the UFL1 family. In terms of assembly, catalytic component of the UFM1 ribosome E3 ligase (UREL) complex. Interacts with E2-like enzyme UFC1.

Its subcellular location is the endoplasmic reticulum membrane. The protein resides in the cytoplasm. It is found in the cytosol. The protein localises to the nucleus. It localises to the chromosome. Its function is as follows. E3 protein ligase that mediates ufmylation, the covalent attachment of the ubiquitin-like modifier UFM1 to lysine residues on target proteins, and which plays a key role in various processes, such as ribosome recycling, response to DNA damage, interferon response or reticulophagy (also called ER-phagy). As part of the UREL complex, plays a key role in ribosome recycling by catalyzing mono-ufmylation of RPL26/uL24 subunit of the 60S ribosome. Ufmylation of RPL26/uL24 occurs on free 60S ribosomes following ribosome dissociation: it weakens the junction between post-termination 60S subunits and SEC61 translocons, promoting release and recycling of the large ribosomal subunit from the endoplasmic reticulum membrane. Ufmylation of RPL26/uL24 and subsequent 60S ribosome recycling either take place after normal termination of translation or after ribosome stalling during cotranslational translocation at the endoplasmic reticulum. Involved in reticulophagy in response to endoplasmic reticulum stress by mediating ufmylation of proteins such as CYB5R3 and RPN1, thereby promoting lysosomal degradation of ufmylated proteins. Ufmylation in response to endoplasmic reticulum stress is essential for processes such as hematopoiesis, blood vessel morphogenesis or inflammatory response. The polypeptide is E3 UFM1-protein ligase 1 (Danio rerio (Zebrafish)).